A 441-amino-acid chain; its full sequence is Putative T-box protein 32 (441 aa).

A DNA-binding region (T-box) is located at residues 18–199 (NVIGSSRTSD…TGPSAKKTPE (182 aa)). Residues 268-289 (SLSSPAALQQDSTVSSDNDFDD) form a disordered region. The segment covering 273–284 (AALQQDSTVSSD) has biased composition (polar residues).

The protein localises to the nucleus. This Caenorhabditis elegans protein is Putative T-box protein 32 (tbx-32).